A 193-amino-acid chain; its full sequence is uncharacterized protein (193 aa).

Helical transmembrane passes span 40–56 (LYIASLAGFIFGLLKLI), 63–79 (AAGLFVFPIKGIISSLC), 86–110 (CSGYMLATFLSLFSLALIIVGIVSC), and 117–138 (FIFPIISIGMALATTETCFQIY). The disordered stretch occupies residues 158–193 (TTTKLSRSSSAPDLSCPSLSTQPTSPNQSLSAYKKY).

It belongs to the chlamydial CPn_0442/CT_006/TC_0274 family.

The protein localises to the cell membrane. This is an uncharacterized protein from Chlamydia muridarum (strain MoPn / Nigg).